The sequence spans 629 residues: Polygalacturonase non-catalytic subunit AroGP2 (629 aa).

The N-terminal stretch at 1-27 (MHNKILVSSYILLVLLFSLSSFNIVVA) is a signal peptide. A propeptide spanning residues 28–109 (KDGDESGNPF…MCAPDLLPSL (82 aa)) is cleaved from the precursor. Residues N125, N143, N255, N277, N333, N368, and N386 are each glycosylated (N-linked (GlcNAc...) asparagine). The span at 267 to 293 (YGQNANGENQNFTSYSTNGNNPQNNFK) shows a compositional bias: polar residues. Residues 267-305 (YGQNANGENQNFTSYSTNGNNPQNNFKNYGVGGNGPSET) are disordered. Positions 414–628 (FFREKMLKSG…FENDMTWATA (215 aa)) constitute a BURP domain.

As to quaternary structure, interacts with polygalacturonase to form heterodimers.

It is found in the secreted. Its subcellular location is the extracellular space. The protein resides in the apoplast. It localises to the cell wall. Its function is as follows. Non-catalytic subunit of polygalacturonase. The polypeptide is Polygalacturonase non-catalytic subunit AroGP2 (GP2) (Solanum lycopersicum (Tomato)).